We begin with the raw amino-acid sequence, 554 residues long: Neutral amino acid transporter 9 (554 aa).

Over 1–112 the chain is Cytoplasmic; that stretch reads MDSDQTPLIN…GSDGTGKNSS (112 aa). A helical transmembrane segment spans residues 113–133; it reads IVTIFMIWNTMMGTSILSIPW. An important for arginine binding and amino acid transport region spans residues 122 to 127; the sequence is TMMGTS. Ser-127 is a binding site for arginine. The Lumenal portion of the chain corresponds to 134 to 139; that stretch reads GIKQAG. The helical transmembrane segment at 140-160 threads the bilayer; it reads FTTGVCILFLMGILTLYCCYR. Over 161–191 the chain is Cytoplasmic; sequence VVKSRGTIPLTDTSNWEFPDVCQYYFGSFGR. The helical transmembrane segment at 192–218 threads the bilayer; sequence WSSLLFSLVSLIGAMIVYWVLMSNFLF. The Lumenal segment spans residues 219-276; the sequence is NTGKFIYNYVNDVNVTDDVLSNNGSDKVICPNPDSTRPLNKSMDTYFGNGTNYEQFET. Asn-232, Asn-241, Asn-258, and Asn-267 each carry an N-linked (GlcNAc...) asparagine glycan. A disulfide bridge connects residues Cys-248 and Cys-417. The helical transmembrane segment at 277–293 threads the bilayer; it reads WWSKTNTVPFYLVVLLL. Residues 294-302 lie on the Cytoplasmic side of the membrane; sequence PLLSFRSPS. A helical membrane pass occupies residues 303–327; the sequence is FFAKFNILGTVSIIYLVSLVTLKAA. Residues 328 to 349 lie on the Lumenal side of the membrane; it reads HLGFHLRFSWNQVQEFFVPEFR. The helical transmembrane segment at 350-370 threads the bilayer; it reads LSFPQLTGILTLAFFIHNCII. Residues 371-387 lie on the Cytoplasmic side of the membrane; that stretch reads TLLKNNRNQKNNVRDLS. Residues 388–408 traverse the membrane as a helical segment; sequence IAYLLVGLTYIYVGVAVFASF. Residues 409-430 lie on the Lumenal side of the membrane; sequence PSPPLSKQCIQQNFLDNFPSSD. A helical transmembrane segment spans residues 431-451; that stretch reads ILAFVARIFLLFQMMTVYPLL. Positions 437–447 match the CARC motif motif; the sequence is RIFLLFQMMTV. Residues 450 to 456 carry the CRAC motif motif; it reads LLGYLVR. At 452-472 the chain is on the cytoplasmic side; that stretch reads GYLVRVQLLGHIFGDIYPSVF. Residues 473 to 493 form a helical membrane-spanning segment; it reads HVLALNIAVVGVGVIMARFYP. Topologically, residues 494-500 are lumenal; that stretch reads NIGGIIR. A helical membrane pass occupies residues 501–521; the sequence is FSGAACGLAFVFVYPSLIHMI. At 522-533 the chain is on the cytoplasmic side; the sequence is SLHRRGQLKVHS. A helical transmembrane segment spans residues 534–554; sequence ILIHVSIIVLGIANLIAQFFM.

It belongs to the amino acid/polyamine transporter 2 family. SLC38A9 subfamily. As to quaternary structure, associated component of the Ragulator complex. Associated component of the Rag GTPases heterodimers. Post-translationally, glycosylated.

It is found in the lysosome membrane. It localises to the late endosome membrane. The catalysed reaction is L-leucine(in) = L-leucine(out). It carries out the reaction L-tyrosine(in) = L-tyrosine(out). It catalyses the reaction L-glutamine(out) = L-glutamine(in). The enzyme catalyses L-asparagine(out) = L-asparagine(in). In terms of biological role, lysosomal amino acid transporter involved in the activation of mTORC1 in response to amino acid levels. Probably acts as an amino acid sensor of the Rag GTPases and Ragulator complexes, 2 complexes involved in amino acid sensing and activation of mTORC1, a signaling complex promoting cell growth in response to growth factors, energy levels, and amino acids. Following activation by amino acids, the Ragulator and Rag GTPases function as a scaffold recruiting mTORC1 to lysosomes where it is in turn activated. SLC38A9 mediates transport of amino acids with low capacity and specificity with a slight preference for polar amino acids. Acts as an arginine sensor. Following activation by arginine binding, mediates transport of L-glutamine, leucine and tyrosine with high efficiency, and is required for the efficient utilization of these amino acids after lysosomal protein degradation. However, the transport mechanism is not well defined and the role of sodium is not clear. Guanine exchange factor (GEF) that, upon arginine binding, stimulates GDP release from RRAGA and therefore activates the Rag GTPase heterodimer and the mTORC1 pathway in response to nutrient sufficiency. The sequence is that of Neutral amino acid transporter 9 from Xenopus tropicalis (Western clawed frog).